A 368-amino-acid chain; its full sequence is Glutaminyl-peptide cyclotransferase (368 aa).

The first 23 residues, 1–23 (MARERRDSKAATFFCLAWALCLA), serve as a signal peptide directing secretion. N-linked (GlcNAc...) asparagine glycans are attached at residues N53 and N65. An intrachain disulfide couples C143 to C169. D164 contacts Zn(2+). E207 acts as the Proton acceptor in catalysis. E208 contacts Zn(2+). D254 acts as the Proton acceptor in catalysis. An N-linked (GlcNAc...) asparagine glycan is attached at N292. H336 provides a ligand contact to Zn(2+). N352 is a glycosylation site (N-linked (GlcNAc...) asparagine).

This sequence belongs to the glutaminyl-peptide cyclotransferase family. In terms of tissue distribution, expressed by the venom gland.

The protein localises to the secreted. The enzyme catalyses N-terminal L-glutaminyl-[peptide] = N-terminal 5-oxo-L-prolyl-[peptide] + NH4(+). Functionally, responsible for the biosynthesis of pyroglutamyl peptides. Has a bias against acidic and tryptophan residues adjacent to the N-terminal glutaminyl residue and a lack of importance of chain length after the second residue. Also catalyzes N-terminal pyroglutamate formation. In Bothrops jararaca (Jararaca), this protein is Glutaminyl-peptide cyclotransferase (QPCT).